The chain runs to 389 residues: Chalcone synthase 4 (389 aa).

Residue Cys164 is part of the active site.

It belongs to the thiolase-like superfamily. Chalcone/stilbene synthases family.

The catalysed reaction is (E)-4-coumaroyl-CoA + 3 malonyl-CoA + 3 H(+) = 2',4,4',6'-tetrahydroxychalcone + 3 CO2 + 4 CoA. It participates in secondary metabolite biosynthesis; flavonoid biosynthesis. Its function is as follows. The primary product of this enzyme is 4,2',4',6'-tetrahydroxychalcone (also termed naringenin-chalcone or chalcone) which can under specific conditions spontaneously isomerize into naringenin. The polypeptide is Chalcone synthase 4 (CHS4) (Medicago sativa (Alfalfa)).